Consider the following 68-residue polypeptide: MPKLKTKSAVKKRFKLTATGKVIASQAGKKHFMRRRTKAQIRNLRGTTILCPKDGYNIKKYFLPYGIN.

It belongs to the bacterial ribosomal protein bL35 family.

This is Large ribosomal subunit protein bL35 from Rickettsia akari (strain Hartford).